A 457-amino-acid polypeptide reads, in one-letter code: UDP-glycosyltransferase 708C1 (457 aa).

Position 31 (G31) interacts with UDP-alpha-D-glucose. H32 (proton acceptor) is an active-site residue. Residue H32 participates in an anthocyanidin binding. Residue T34 participates in UDP-alpha-D-glucose binding. N94 provides a ligand contact to an anthocyanidin. D129 acts as the Charge relay in catalysis. T150 is a UDP-alpha-D-glucose binding site. The tract at residues 279-280 (NR) is UDP. Residues V341, Q343, H358, W361, N362, S363, and E366 each contribute to the UDP-alpha-D-glucose site. G381 is an an anthocyanidin binding site. D382 and Q383 together coordinate UDP-alpha-D-glucose.

Belongs to the UDP-glycosyltransferase family. In terms of tissue distribution, expressed in cotyledons. Not detected in flowers, leaves, roots and hypocotyls.

It catalyses the reaction a 3'-hydro-2'-hydroxy-beta-oxodihydrochalcone + UDP-alpha-D-glucose = a 3'-(beta-D-glucopyranosyl)-2'-hydroxy-beta-oxodihydrochalcone + UDP + H(+). Its function is as follows. UDP-glucose-dependent glucosyltransferase catalyzing the C-glucosylation of 2-hydroxyflavanones (2-hydroxynaringenin, 2-hydroxyeriodictyol and 2-hydroxypinocembrin) and phloretin. No activity with flavanones, flavones or flavonols. Exhibits C-glycosylation activity toward 2',4',6'-trihydroxyacetophenone and phloretin using UDP-glucose as sugar donor. Can use UDP-galactose as sugar donor, but catalytic efficiency is 14-fold lower toward UDP-galactose than toward UDP-glucose. This chain is UDP-glycosyltransferase 708C1, found in Fagopyrum esculentum (Common buckwheat).